Here is a 1530-residue protein sequence, read N- to C-terminus: Brefeldin A resistance protein (1530 aa).

Positions 1–26 are enriched in polar residues; sequence MNQNSDTTHGQALGSTLNHTTEVTRI. Residues 1 to 100 form a disordered region; the sequence is MNQNSDTTHG…SDDSSVDRLA (100 aa). N28 carries an N-linked (GlcNAc...) asparagine glycan. Low complexity predominate over residues 36 to 48; the sequence is SSSNVDESLDSSN. Over residues 54–64 the composition is skewed to basic and acidic residues; sequence KASHTNEEYRS. N67 carries an N-linked (GlcNAc...) asparagine glycan. The segment covering 72 to 93 has biased composition (low complexity); sequence PSSSNEPSPESSSNSDSSSSDD. In terms of domain architecture, ABC transporter 1 spans 153–410; that stretch reads KTFPDIFLQP…FLDMGFDCHP (258 aa). 3 N-linked (GlcNAc...) asparagine glycosylation sites follow: N273, N334, and N450. A phosphoserine mark is found at S486 and S489. A Phosphothreonine modification is found at T491. Transmembrane regions (helical) follow at residues 539–559, 575–595, 620–640, 649–669, 684–704, and 791–811; these read AYIGSMAFAFLFQSLIIGSIF, VLFFSILFCALQSLSEIANMF, LIVDLPFRFINISVFSIVLYF, GGFWTYFLFLFIGATCMSAFF, ALGGIGVLAIAIYTGYAIPNI, and LAIIIGYYAFLVFVNIVASET. The tract at residues 843–864 is disordered; it reads PLDLETGQDTQGGDVVKESPDN. Residues 882-1125 enclose the ABC transporter 2 domain; sequence FSWRNLNYDI…LLNYFESHGA (244 aa). 918-925 contacts ATP; sequence GESGAGKT. 2 N-linked (GlcNAc...) asparagine glycosylation sites follow: N1159 and N1175. A Phosphothreonine modification is found at T1186. Transmembrane regions (helical) follow at residues 1220 to 1240, 1255 to 1275, 1300 to 1320, 1338 to 1358, 1367 to 1387, and 1392 to 1412; these read ILMSKLALDIFAGLFIGFTFY, AVFMATVLAVPLINGLQPKFI, AIIVEIPFNLVFGTLFFLCWF, YAWLLYMFFQMYFSTFGQAVA, ASVVNSLLFTFVITFNGVLQP, and VGFWHWMHSLTPFTYLIEGLL. N1449 and N1460 each carry an N-linked (GlcNAc...) asparagine glycan. Residues 1492 to 1512 traverse the membrane as a helical segment; sequence GIFVGYVFFNIFAVLLLFYVF.

Belongs to the ABC transporter superfamily. ABCG family. PDR (TC 3.A.1.205) subfamily.

It localises to the membrane. Confers hyper-resistance to brefeldin A (BFA), an inhibitor of intracellular protein transport. Could serve as an efflux pump of various antibiotics. The protein is Brefeldin A resistance protein (bfr1) of Schizosaccharomyces pombe (strain 972 / ATCC 24843) (Fission yeast).